A 654-amino-acid chain; its full sequence is Beta-galactosidase-1-like protein (654 aa).

A signal peptide spans 1-27 (MAPKKPSCLRSLLLPLSLTLLLPQADT). Asparagine 97 is a glycosylation site (N-linked (GlcNAc...) asparagine). Glutamate 186 functions as the Proton donor in the catalytic mechanism. The N-linked (GlcNAc...) asparagine glycan is linked to asparagine 243. The active-site Nucleophile is glutamate 264.

It belongs to the glycosyl hydrolase 35 family.

It is found in the secreted. Probable glycosyl hydrolase. The chain is Beta-galactosidase-1-like protein (GLB1L) from Macaca fascicularis (Crab-eating macaque).